A 196-amino-acid polypeptide reads, in one-letter code: dTTP/UTP pyrophosphatase (196 aa).

The Proton acceptor role is filled by Asp77.

It belongs to the Maf family. YhdE subfamily. It depends on a divalent metal cation as a cofactor.

The protein resides in the cytoplasm. It catalyses the reaction dTTP + H2O = dTMP + diphosphate + H(+). It carries out the reaction UTP + H2O = UMP + diphosphate + H(+). Its function is as follows. Nucleoside triphosphate pyrophosphatase that hydrolyzes dTTP and UTP. May have a dual role in cell division arrest and in preventing the incorporation of modified nucleotides into cellular nucleic acids. The polypeptide is dTTP/UTP pyrophosphatase (Christiangramia forsetii (strain DSM 17595 / CGMCC 1.15422 / KT0803) (Gramella forsetii)).